The sequence spans 63 residues: Conotoxin Pu5.4 (63 aa).

The signal sequence occupies residues 1-22 (MRCVPVFVILLLLIASTPSVDA). A propeptide spanning residues 23-50 (TQKTKDDMSLASFHDNAKRFLQTLRNTR) is cleaved from the precursor. At tryptophan 62 the chain carries Tryptophan amide.

The protein belongs to the conotoxin T superfamily. Post-translationally, contains 2 disulfide bonds that can be either 'C1-C3, C2-C4' or 'C1-C4, C2-C3', since these disulfide connectivities have been observed for conotoxins with cysteine framework V (for examples, see AC P0DQQ7 and AC P81755). Expressed by the venom duct.

The protein localises to the secreted. The sequence is that of Conotoxin Pu5.4 from Conus pulicarius (Flea-bitten cone).